Consider the following 445-residue polypeptide: Glycine betaine monooxygenase oxygenase subunit (445 aa).

The Rieske domain occupies 73–180; it reads WLFVGMTCEI…VTHAGGFLFV (108 aa). Cys-115, His-117, Cys-135, and His-138 together coordinate [2Fe-2S] cluster. 2 residues coordinate Fe cation: His-234 and His-239.

Belongs to the bacterial ring-hydroxylating dioxygenase alpha subunit family. In terms of assembly, homotrimer. The system is composed of an oxygenase subunit (BmoA) and a reductase subunit (BmoB). Maximal specific activity is obtained when the ratio of BmoA to BmoB is 5:1. Requires [2Fe-2S] cluster as cofactor. It depends on Fe cation as a cofactor.

The catalysed reaction is glycine betaine + NADH + O2 + H(+) = N,N-dimethylglycine + formaldehyde + NAD(+) + H2O. With respect to regulation, activity is absolutely dependent on the presence of BmoB. Glycine betaine monooxygenase activity is significantly enhanced by Fe(2+) and severely inhibited by heavy-metal ions, including Co(2+), Mn(2+), Zn(2+), Cu(2+) and Ag(+). Severely inhibited by EDTA. Involved in degradation of glycine betaine. Part of a Rieske-type oxygenase system that catalyzes the conversion of glycine betaine (GB) to dimethylglycine (DMG). This subunit is the terminal oxygenase component of the system. Is specific for GB, and does not show any activity on choline, L-carnitine, stachydrine, dimethylglycine or sarcosine. Activity is strictly dependent on NADH. This chain is Glycine betaine monooxygenase oxygenase subunit, found in Chromohalobacter salexigens (strain ATCC BAA-138 / DSM 3043 / CIP 106854 / NCIMB 13768 / 1H11).